A 201-amino-acid chain; its full sequence is Molybdenum cofactor guanylyltransferase (201 aa).

GTP is bound by residues 15–17 (LAG), lysine 28, aspartate 74, and aspartate 104. Aspartate 104 contacts Mg(2+).

This sequence belongs to the MobA family. As to quaternary structure, monomer. Requires Mg(2+) as cofactor.

It localises to the cytoplasm. It carries out the reaction Mo-molybdopterin + GTP + H(+) = Mo-molybdopterin guanine dinucleotide + diphosphate. Transfers a GMP moiety from GTP to Mo-molybdopterin (Mo-MPT) cofactor (Moco or molybdenum cofactor) to form Mo-molybdopterin guanine dinucleotide (Mo-MGD) cofactor. This chain is Molybdenum cofactor guanylyltransferase, found in Pseudomonas syringae pv. tomato (strain ATCC BAA-871 / DC3000).